Reading from the N-terminus, the 123-residue chain is Large ribosomal subunit protein uL24 (123 aa).

The protein belongs to the universal ribosomal protein uL24 family. Part of the 50S ribosomal subunit.

One of two assembly initiator proteins, it binds directly to the 5'-end of the 23S rRNA, where it nucleates assembly of the 50S subunit. Functionally, one of the proteins that surrounds the polypeptide exit tunnel on the outside of the subunit. The protein is Large ribosomal subunit protein uL24 of Solibacter usitatus (strain Ellin6076).